A 364-amino-acid polypeptide reads, in one-letter code: Probable methyltransferase ICS2 (364 aa).

Residues Tyr18, Cys61, Asp98, Leu99, Ser133, and Phe134 each coordinate S-adenosyl-L-homocysteine. The Mg(2+) site is built by Asn172, Asp258, Phe260, and Asn261.

This sequence belongs to the methyltransferase superfamily. Type-7 methyltransferase family. The cofactor is Mg(2+).

Functionally, no detectable N-methyltransferase activity. The protein is Probable methyltransferase ICS2 of Camellia irrawadiensis (Burmese tea).